We begin with the raw amino-acid sequence, 137 residues long: uncharacterized protein (137 aa).

Residues 5 to 136 (NRHLIHQINQ…FSHLFRMFLQ (132 aa)) enclose the HTH marR-type domain. Residues 51–74 (QKEIWSYLNVEAPTVTRTIKRLEE) constitute a DNA-binding region (H-T-H motif).

This is an uncharacterized protein from Bacillus subtilis (strain 168).